The sequence spans 291 residues: Phytanoyl-CoA dioxygenase domain-containing protein 1 (291 aa).

T55 carries the post-translational modification Phosphothreonine. Residues K102, M141, 156 to 158 (HQD), and W174 each bind 2-oxoglutarate. Positions 156 and 158 each coordinate Fe cation. H246 is a binding site for Fe cation. 2-oxoglutarate is bound by residues S248 and R257.

The protein belongs to the PhyH family. PHYHD1 subfamily. Fe cation serves as cofactor.

With respect to regulation, activity is increased by ascorbate. Inhibited by myristoyl-CoA. 2-oxoglutarate(2OG)-dependent dioxygenase that catalyzes the conversion of 2-oxoglutarate to succinate and CO(2) in an iron-dependent manner. However, does not couple 2OG turnover to the hydroxylation of acyl-coenzyme A derivatives, implying that it is not directly involved in phytanoyl coenzyme-A metabolism. Does not show detectable activity towards fatty acid CoA thioesters. Its function is as follows. Isoform 2 probably lacks enzyme activity. Functionally, isoform 3 probably lacks enzyme activity. In Homo sapiens (Human), this protein is Phytanoyl-CoA dioxygenase domain-containing protein 1.